Consider the following 71-residue polypeptide: cAMP-dependent protein kinase inhibitor beta (71 aa).

Residues 1-21 form a disordered region; that stretch reads MTDVESVISSFASSARAGRRN. Thr2 carries the blocked amino end (Thr) modification. Ser35 is subject to Phosphoserine. A disordered region spans residues 51–71; the sequence is AKMKNEEKDQGQPKKPLDEDK.

It belongs to the PKI family. Testis.

Functionally, extremely potent competitive inhibitor of cAMP-dependent protein kinase activity, this protein interacts with the catalytic subunit of the enzyme after the cAMP-induced dissociation of its regulatory chains. This Rattus norvegicus (Rat) protein is cAMP-dependent protein kinase inhibitor beta (Pkib).